We begin with the raw amino-acid sequence, 125 residues long: Neuropeptide B (125 aa).

The first 24 residues, 1–24 (MARSATLAAAALALCLLLAPPGLA), serve as a signal peptide directing secretion. The segment at 54-73 (RRSQPYRGAEPPGGAGASPE) is disordered. Residues 56 to 125 (SQPYRGAEPP…SLRAADCLAA (70 aa)) constitute a propeptide that is removed on maturation.

Belongs to the neuropeptide B/W family. As to expression, widely expressed in the central nervous system. High levels are found in substantia nigra, hypothalamus, hippocampus, spinal cord, placenta and fetal brain; lower levels are found in testis, uterus and ovary. Also detected at high levels in colorectal adenocarcinoma.

It is found in the secreted. Its function is as follows. May be involved in the regulation of feeding, neuroendocrine system, memory, learning and in the afferent pain pathway. The polypeptide is Neuropeptide B (NPB) (Homo sapiens (Human)).